A 247-amino-acid polypeptide reads, in one-letter code: Ribonuclease PH (247 aa).

Phosphate is bound by residues Arg-87 and 125–127 (GTR).

Belongs to the RNase PH family. As to quaternary structure, homohexameric ring arranged as a trimer of dimers.

It catalyses the reaction tRNA(n+1) + phosphate = tRNA(n) + a ribonucleoside 5'-diphosphate. Its function is as follows. Phosphorolytic 3'-5' exoribonuclease that plays an important role in tRNA 3'-end maturation. Removes nucleotide residues following the 3'-CCA terminus of tRNAs; can also add nucleotides to the ends of RNA molecules by using nucleoside diphosphates as substrates, but this may not be physiologically important. Probably plays a role in initiation of 16S rRNA degradation (leading to ribosome degradation) during starvation. The polypeptide is Ribonuclease PH (Frankia casuarinae (strain DSM 45818 / CECT 9043 / HFP020203 / CcI3)).